A 156-amino-acid polypeptide reads, in one-letter code: Transcription antitermination protein NusB (156 aa).

This sequence belongs to the NusB family.

Functionally, involved in transcription antitermination. Required for transcription of ribosomal RNA (rRNA) genes. Binds specifically to the boxA antiterminator sequence of the ribosomal RNA (rrn) operons. The chain is Transcription antitermination protein NusB from Mycobacterium bovis (strain ATCC BAA-935 / AF2122/97).